Here is a 321-residue protein sequence, read N- to C-terminus: D-alanine--D-alanine ligase (321 aa).

Residues 121–315 (RIWFLTNNIN…FTNLIEEIIK (195 aa)) enclose the ATP-grasp domain. Residue 147–199 (PMKRPYVIKPLTQGSSIGVEVIFAEDDFNFADYDFPYGDQVIIEQYIKGRELQ) participates in ATP binding. Residues E268, E282, and N284 each contribute to the Mg(2+) site.

This sequence belongs to the D-alanine--D-alanine ligase family. Mg(2+) is required as a cofactor. It depends on Mn(2+) as a cofactor.

It localises to the cytoplasm. The enzyme catalyses 2 D-alanine + ATP = D-alanyl-D-alanine + ADP + phosphate + H(+). It participates in cell wall biogenesis; peptidoglycan biosynthesis. Its function is as follows. Cell wall formation. The sequence is that of D-alanine--D-alanine ligase from Rickettsia africae (strain ESF-5).